The primary structure comprises 338 residues: Ketol-acid reductoisomerase (NADP(+)) (338 aa).

A KARI N-terminal Rossmann domain is found at 1–181; that stretch reads MKVFYDKDAD…GGGKAGIIET (181 aa). NADP(+) is bound by residues 24 to 27, R47, and S52; that span reads YGSQ. H107 is a catalytic residue. An NADP(+)-binding site is contributed by G133. The 146-residue stretch at 182–327 folds into the KARI C-terminal knotted domain; sequence NFREETETDL…EKLRAMMPWI (146 aa). D190, E194, E226, and E230 together coordinate Mg(2+). S251 lines the substrate pocket.

Belongs to the ketol-acid reductoisomerase family. Mg(2+) is required as a cofactor.

The enzyme catalyses (2R)-2,3-dihydroxy-3-methylbutanoate + NADP(+) = (2S)-2-acetolactate + NADPH + H(+). It carries out the reaction (2R,3R)-2,3-dihydroxy-3-methylpentanoate + NADP(+) = (S)-2-ethyl-2-hydroxy-3-oxobutanoate + NADPH + H(+). It functions in the pathway amino-acid biosynthesis; L-isoleucine biosynthesis; L-isoleucine from 2-oxobutanoate: step 2/4. Its pathway is amino-acid biosynthesis; L-valine biosynthesis; L-valine from pyruvate: step 2/4. Involved in the biosynthesis of branched-chain amino acids (BCAA). Catalyzes an alkyl-migration followed by a ketol-acid reduction of (S)-2-acetolactate (S2AL) to yield (R)-2,3-dihydroxy-isovalerate. In the isomerase reaction, S2AL is rearranged via a Mg-dependent methyl migration to produce 3-hydroxy-3-methyl-2-ketobutyrate (HMKB). In the reductase reaction, this 2-ketoacid undergoes a metal-dependent reduction by NADPH to yield (R)-2,3-dihydroxy-isovalerate. This chain is Ketol-acid reductoisomerase (NADP(+)), found in Leptothrix cholodnii (strain ATCC 51168 / LMG 8142 / SP-6) (Leptothrix discophora (strain SP-6)).